Here is a 661-residue protein sequence, read N- to C-terminus: Sodium/potassium/calcium exchanger 2 (661 aa).

At 1 to 38 (MDLQQSTTITSLEKWCLDESLSGCRRHYSVKKKLKLIR) the chain is on the cytoplasmic side. Residues 39–59 (VLGLFMGLVAISTVSFSISAF) form a helical membrane-spanning segment. Residues 60 to 132 (SETDTQSTGE…DIFSLEERRK (73 aa)) are Extracellular-facing. Residues 99-120 (PQPPLSKEGESENSTDHAQGDY) are disordered. The segment covering 105–120 (KEGESENSTDHAQGDY) has biased composition (basic and acidic residues). N-linked (GlcNAc...) asparagine glycosylation is present at Asn111. A helical transmembrane segment spans residues 133–153 (GAIILHVIGMIYMFIALAIVC). Residues 154–178 (DEFFVPSLTVITEKLGISDDVAGAT) lie on the Cytoplasmic side of the membrane. Residues 174–214 (VAGATFMAAGGSAPELFTSLIGVFIAHSNVGIGTIVGSAVF) form an Alpha-1 repeat. Residues 179–199 (FMAAGGSAPELFTSLIGVFIA) form a helical membrane-spanning segment. Residues 200-204 (HSNVG) lie on the Extracellular side of the membrane. A helical membrane pass occupies residues 205-225 (IGTIVGSAVFNILFVIGMCAL). Residues 226–243 (FSREILNLTWWPLFRDVS) lie on the Cytoplasmic side of the membrane. Residues 244 to 264 (FYIVDLIMLIIFFLDNVIMWW) traverse the membrane as a helical segment. A topological domain (extracellular) is located at residue Glu265. The helical transmembrane segment at 266–286 (SLLLLTAYFCYVVFMKFNVQV) threads the bilayer. Residues 287–497 (EKWVKQMINR…PDVRKPSSRK (211 aa)) lie on the Cytoplasmic side of the membrane. Positions 306-336 (EAQAKPSAARDKDEPTLPAKPRLQRGGSSAS) are disordered. Phosphoserine occurs at positions 336 and 340. The interval 397–439 (DENERQNGAANHVEKIELPNSTSTDVEMTPSSDASEPVQNGNL) is disordered. Residues 415–439 (PNSTSTDVEMTPSSDASEPVQNGNL) show a composition bias toward polar residues. The helical transmembrane segment at 498–518 (FFPITFFGSITWIAVFSYLMV) threads the bilayer. At 519–533 (WWAHQVGETIGISEE) the chain is on the extracellular side. The helical transmembrane segment at 534-554 (IMGLTILAAGTSIPDLITSVI) threads the bilayer. One copy of the Alpha-2 repeat lies at 541 to 572 (AAGTSIPDLITSVIVARKGLGDMAVSSSVGSN). The Cytoplasmic segment spans residues 555 to 569 (VARKGLGDMAVSSSV). The helical transmembrane segment at 570–590 (GSNIFDITVGLPLPWLLYTVI) threads the bilayer. Residues 591–602 (HRFQPVAVSSNG) are Extracellular-facing. Residues 603 to 623 (LFCAIVLLFIMLLFVILSIAL) traverse the membrane as a helical segment. Topologically, residues 624-630 (CKWRMNK) are cytoplasmic. The helical transmembrane segment at 631-651 (ILGFIMFGLYFVFLVVSVLLE) threads the bilayer. Over 652-661 (DRILTCPVSI) the chain is Extracellular.

The protein belongs to the Ca(2+):cation antiporter (CaCA) (TC 2.A.19) family. SLC24A subfamily.

The protein resides in the cell membrane. The enzyme catalyses Ca(2+)(out) + K(+)(out) + 4 Na(+)(in) = Ca(2+)(in) + K(+)(in) + 4 Na(+)(out). Calcium, potassium:sodium antiporter that transports 1 Ca(2+) and 1 K(+) in exchange for 4 Na(+). Required for learming and memory by regulating neuronal Ca(2+), which is essential for the development of synaptic plasticity. The polypeptide is Sodium/potassium/calcium exchanger 2 (SLC24A2) (Homo sapiens (Human)).